We begin with the raw amino-acid sequence, 2227 residues long: Genome polyprotein (2227 aa).

Short sequence motifs ((L)YPX(n)L motif) lie at residues 167-171 (YPHGL) and 200-205 (YPVWEL). The involved in P1-2A pentamerization stretch occupies residues 766-836 (MMSRIAAGDL…PRKMKGLFSQ (71 aa)). A helical membrane pass occupies residues 1011 to 1031 (TVEIINTVLCFVKSGILLYVI). Positions 1043–1070 (IGLLRVMNYADIGCSVISCGKVFSKMLE) are membrane-penetrating ability. Residues 1127-1152 (KKKDILNILKDNQQKIEKAIEEADNF) adopt a coiled-coil conformation. In terms of domain architecture, SF3 helicase spans 1204–1366 (HQKLKNLGSI…SFFKNPHNDM (163 aa)). Position 1230–1237 (1230–1237 (GKRGGGKS)) interacts with ATP. Residues 1462 to 1482 (WVAVGAAVGILGVLVGGWFVY) form a helical membrane-spanning segment. The residue at position 1499 (tyrosine 1499) is an O-(5'-phospho-RNA)-tyrosine. The Peptidase C3 domain occupies 1514–1728 (DPVESQSTLE…VAKLVTQEMF (215 aa)). Residues histidine 1563, aspartate 1603, and cysteine 1691 each act as for protease 3C activity in the active site. The RdRp catalytic domain occupies 1976–2097 (DVGLDLDFSA…VFSRDVQIDN (122 aa)).

The protein belongs to the picornaviridae polyprotein family. Homodimer. Homomultimer; probably interacts with membranes in a multimeric form. Seems to assemble into amyloid-like fibers. As to quaternary structure, homodimer. Monomer. Interacts with protein 3CD. In terms of assembly, interacts with host ACBD3. Interacts with protein 3AB. As to quaternary structure, interacts with human MAVS. In terms of assembly, homodimer; disulfide-linked. Homopentamer. Homooligomer. As to quaternary structure, interacts with capsid protein VP2. Interacts with capsid protein VP3. In terms of assembly, interacts with capsid protein VP1. Interacts with capsid protein VP3. Interacts with capsid protein VP1. Interacts with capsid protein VP2. In terms of processing, specific enzymatic cleavages by viral protease in vivo yield a variety of precursors and mature proteins. Polyprotein processing intermediates are produced, such as P1-2A which is a functional precursor of the structural proteins, VP0 which is a VP4-VP2 precursor, VP1-2A precursor, 3ABC precursor which is a stable and catalytically active precursor of 3A, 3B and 3C proteins, 3AB and 3CD precursors. The assembly signal 2A is removed from VP1-2A by a host protease, possibly host Cathepsin L. This cleavage occurs over a region of 3 amino-acids probably generating VP1 proteins with heterogeneous C-termini. During virion maturation, immature virions are rendered infectious following cleavage of VP0 into VP4 and VP2. This maturation seems to be an autocatalytic event triggered by the presence of RNA in the capsid and is followed by a conformational change of the particle. Post-translationally, the assembly signal 2A is removed from VP1-2A by a host protease, possibly host Cathepsin L in naked virions. This cleavage does not occur in enveloped virions. This cleavage occurs over a region of 3 amino-acids probably generating VP1 proteins with heterogeneous C-termini. In terms of processing, VPg is uridylylated prior to priming replication into VPg-pUpU. Unlike other picornaviruses, does not seem to be myristoylated.

Its subcellular location is the virion. The protein resides in the host endosome. It is found in the host multivesicular body. The protein localises to the host membrane. It localises to the host mitochondrion outer membrane. Its subcellular location is the host cytoplasm. The protein resides in the host cytoplasmic vesicle membrane. The catalysed reaction is RNA(n) + a ribonucleoside 5'-triphosphate = RNA(n+1) + diphosphate. The enzyme catalyses a ribonucleoside 5'-triphosphate + H2O = a ribonucleoside 5'-diphosphate + phosphate + H(+). It carries out the reaction Selective cleavage of Gln-|-Gly bond in the poliovirus polyprotein. In other picornavirus reactions Glu may be substituted for Gln, and Ser or Thr for Gly.. Functionally, capsid proteins VP1, VP2, and VP3 form a closed capsid enclosing the viral positive strand RNA genome. All these proteins contain a beta-sheet structure called beta-barrel jelly roll. Together they form an icosahedral capsid (T=3) composed of 60 copies of each VP1, VP2, and VP3, with a diameter of approximately 300 Angstroms. VP1 is situated at the 12 fivefold axes, whereas VP2 and VP3 are located at the quasi-sixfold axes. The naked capsid interacts with the host receptor HAVCR1 to provide virion attachment to and probably entry into the target cell. Its function is as follows. VP0 precursor is a component of the immature procapsids. Plays a role in the assembly of the 12 pentamers into an icosahedral structure. Has not been detected in mature virions, supposedly owing to its small size. In terms of biological role, precursor component of immature procapsids that corresponds to an extended form of the structural protein VP1. After maturation, possibly by the host Cathepsin L, the assembly signal 2A is cleaved to give rise to the mature VP1 protein. Functionally, functions as a viroporin. Affects membrane integrity and causes an increase in membrane permeability. Involved in host intracellular membrane rearrangements probably to give rise to the viral factories. Does not disrupt calcium homeostasis or glycoprotein trafficking. Antagonizes the innate immune response of the host by suppressing IFN-beta synthesis, which it achieves by interfering with the RIG-I/IFIH1 pathway. Its function is as follows. Affects membrane integrity and causes an increase in membrane permeability. Associates with and induces structural rearrangements of intracellular membranes. Displays RNA-binding activity. In terms of biological role, the precursor 3ABC is targeted to the mitochondrial membrane where protease 3C activity cleaves and inhibits the host antiviral protein MAVS, thereby disrupting activation of IRF3 through the IFIH1/MDA5 pathway. In vivo, the protease activity of 3ABC precursor is more efficient in cleaving the 2BC precursor than that of protein 3C. The 3ABC precursor may therefore play a role in the proteolytic processing of the polyprotein. Possible viroporin. Functionally, interacts with the 3CD precursor and with RNA structures found at both the 5'- and 3'-termini of the viral genome. Since the 3AB precursor contains the hydrophobic domain 3A, it probably anchors the whole viral replicase complex to intracellular membranes on which viral RNA synthesis occurs. Its function is as follows. May serve as membrane anchor to the 3AB and 3ABC precursors via its hydrophobic domain. May interact with RNA. Acts as a primer for viral RNA replication and remains covalently bound to viral genomic RNA. VPg is uridylylated prior to priming replication into VPg-pUpU. The VPg-pUpU is then used as primer on the genomic RNA poly(A) by the RNA-dependent RNA polymerase to replicate the viral genome. In terms of biological role, cysteine protease that generates mature viral proteins from the precursor polyprotein. In addition to its proteolytic activity, it binds to viral RNA, and thus influences viral genome replication. RNA and substrate bind cooperatively to the protease. Cleaves IKBKG/NEMO to impair innate immune signaling. Cleaves host PABPC1 which may participate in the switch of viral translation to RNA synthesis. Functionally, interacts with the 3AB precursor and with RNA structures found at both the 5'- and 3'-termini of the viral genome. Disrupts TLR3 signaling by degrading the host adapter protein TICAM1/TRIF. Its function is as follows. RNA-directed RNA polymerase 3D-POL replicates genomic and antigenomic RNA by recognizing replications specific signals. The chain is Genome polyprotein from Human hepatitis A virus genotype IA (isolate H2) (HHAV).